A 700-amino-acid polypeptide reads, in one-letter code: UvrABC system protein C (700 aa).

Residues 11 to 90 (TTPGVYLYKD…IKKHRPRYNI (80 aa)) form the GIY-YIG domain. The UVR domain occupies 200–235 (TELIDMLRADMQAASDALEFEEAALLRDQLQAVERT).

This sequence belongs to the UvrC family. As to quaternary structure, interacts with UvrB in an incision complex.

The protein localises to the cytoplasm. In terms of biological role, the UvrABC repair system catalyzes the recognition and processing of DNA lesions. UvrC both incises the 5' and 3' sides of the lesion. The N-terminal half is responsible for the 3' incision and the C-terminal half is responsible for the 5' incision. This Oleidesulfovibrio alaskensis (strain ATCC BAA-1058 / DSM 17464 / G20) (Desulfovibrio alaskensis) protein is UvrABC system protein C.